The sequence spans 597 residues: Elongation factor 4 (597 aa).

A tr-type G domain is found at 2 to 184; it reads KNIRNFSIIA…EIVAKIPAPA (183 aa). Residues 14–19 and 131–134 each bind GTP; these read DHGKST and NKID.

It belongs to the TRAFAC class translation factor GTPase superfamily. Classic translation factor GTPase family. LepA subfamily.

It is found in the cell inner membrane. It catalyses the reaction GTP + H2O = GDP + phosphate + H(+). In terms of biological role, required for accurate and efficient protein synthesis under certain stress conditions. May act as a fidelity factor of the translation reaction, by catalyzing a one-codon backward translocation of tRNAs on improperly translocated ribosomes. Back-translocation proceeds from a post-translocation (POST) complex to a pre-translocation (PRE) complex, thus giving elongation factor G a second chance to translocate the tRNAs correctly. Binds to ribosomes in a GTP-dependent manner. In Neisseria meningitidis serogroup A / serotype 4A (strain DSM 15465 / Z2491), this protein is Elongation factor 4.